Here is a 285-residue protein sequence, read N- to C-terminus: Acrosomal protein SP-10 (285 aa).

The first 21 residues, 1–21 (MNMFLLLMSLYLLGSARGTSG), serve as a signal peptide directing secretion. The tract at residues 64-200 (TLSEHGSSEH…GEQPSGAPIS (137 aa)) is disordered. 19 tandem repeats follow at residues 66 to 70 (SEHGS), 71 to 75 (SEHGS), 85 to 89 (PGEHA), 91 to 95 (SEHAS), 110 to 114 (VGEQP), 115 to 119 (SGEQP), 120 to 124 (SGEHL), 125 to 129 (SGEQS), 130 to 134 (LGEHA), 135 to 139 (SGEQP), 145 to 149 (SGEHA), 150 to 154 (SGEQP), 155 to 159 (SGEHA), 160 to 164 (SGEQP), 165 to 169 (SGEQP), 170 to 174 (SGEHA), 175 to 179 (SGEQS), 180 to 184 (LGEHA), and 190 to 194 (SGEQP). The 3 X 5 AA repeats of S-E-H-[GA]-A stretch occupies residues 66-95 (SEHGSSEHGSREHTVAEHTPGEHAESEHAS). The segment covering 69–95 (GSSEHGSREHTVAEHTPGEHAESEHAS) has biased composition (basic and acidic residues). The 7 X 5 AA repeats of S-G-E-H-[AL] stretch occupies residues 85–184 (PGEHAESEHA…SGEQSLGEHA (100 aa)). The interval 110–194 (VGEQPSGEQP…LSEKPSGEQP (85 aa)) is 9 X 5 AA repeats of [SV]-G-E-Q-[PSA]. An N-linked (GlcNAc...) asparagine glycan is attached at Asn-278.

Testis.

It is found in the cytoplasmic vesicle. The protein localises to the secretory vesicle. The protein resides in the acrosome. The sequence is that of Acrosomal protein SP-10 (ACRV1) from Papio hamadryas (Hamadryas baboon).